Here is a 301-residue protein sequence, read N- to C-terminus: Cuticle collagen 2 (301 aa).

The first 37 residues, Met-1–Asn-37, serve as a signal peptide directing secretion. Triple-helical region stretches follow at residues Gly-105–Gly-134, Gly-153–Pro-176, Gly-183–Ser-212, and Gly-215–Cys-282. Residues Pro-109–Lys-284 form a disordered region. Pro residues-rich tracts occupy residues Thr-143–Asp-170 and Pro-179–Ala-191. Residues Gly-201–Gly-218 are compositionally biased toward gly residues. Positions Glu-219–Ala-229 are enriched in pro residues. Positions Pro-252 to Asp-261 are enriched in low complexity. The span at Gly-262–Gly-274 shows a compositional bias: gly residues.

It belongs to the cuticular collagen family. As to quaternary structure, collagen polypeptide chains are complexed within the cuticle by disulfide bonds and other types of covalent cross-links. Syncytial dorsal and ventral epidermis.

Its function is as follows. Nematode cuticles are composed largely of collagen-like proteins. The cuticle functions both as an exoskeleton and as a barrier to protect the worm from its environment. This is Cuticle collagen 2 (col-2) from Caenorhabditis elegans.